We begin with the raw amino-acid sequence, 966 residues long: Probable transport protein MmpL11 (966 aa).

A run of 12 helical transmembrane segments spans residues 13–33 (WLVFTGWLLALVPAVYLAMTQ), 188–208 (IILMVLVAVFGSLAAAAIPLA), 214–234 (VVITMGLVFVLSMHTTMSVFV), 235–255 (TSTVSMFGIALAVDYSLFILM), 279–299 (GLAVVLSGMTVIASLTGIYLI), 311–331 (AILAVAVAMLTSATLTPAVLA), 373–393 (ALAASTVLLVMAAPATLMVLG), 527–547 (TQPLVLVFVAVIAFLMLLISI), 557–577 (VLMTLLSVAAAYGSLVMVFQW), 595–615 (VPPLVLAMTFGLSMDYEIFLL), 646–666 (AALIMIAVFCGFAFAGMPLVA), and 668–688 (IGVACAVAIAVDATVVRLVLV).

The protein belongs to the resistance-nodulation-cell division (RND) (TC 2.A.6) family. MmpL subfamily.

The protein localises to the cell membrane. In Mycobacterium bovis (strain ATCC BAA-935 / AF2122/97), this protein is Probable transport protein MmpL11 (mmpL11).